A 302-amino-acid chain; its full sequence is Proteasome subunit beta (302 aa).

Over residues 1–10 the composition is skewed to basic and acidic residues; it reads MAGRVREVSH. The segment at 1–21 is disordered; it reads MAGRVREVSHSSDQSGRLPAA. Positions 1–67 are cleaved as a propeptide — removed in mature form; by autocatalysis; sequence MAGRVREVSH…GPGAGEPPHA (67 aa). The Nucleophile role is filled by Thr-68. The disordered stretch occupies residues 283–302; it reads RRGNPGGNPGISAVHGDGGN.

It belongs to the peptidase T1B family. The 20S proteasome core is composed of 14 alpha and 14 beta subunits that assemble into four stacked heptameric rings, resulting in a barrel-shaped structure. The two inner rings, each composed of seven catalytic beta subunits, are sandwiched by two outer rings, each composed of seven alpha subunits. The catalytic chamber with the active sites is on the inside of the barrel. Has a gated structure, the ends of the cylinder being occluded by the N-termini of the alpha-subunits. Is capped by the proteasome-associated ATPase, ARC.

The protein resides in the cytoplasm. It carries out the reaction Cleavage of peptide bonds with very broad specificity.. It functions in the pathway protein degradation; proteasomal Pup-dependent pathway. The formation of the proteasomal ATPase ARC-20S proteasome complex, likely via the docking of the C-termini of ARC into the intersubunit pockets in the alpha-rings, may trigger opening of the gate for substrate entry. Interconversion between the open-gate and close-gate conformations leads to a dynamic regulation of the 20S proteasome proteolysis activity. Component of the proteasome core, a large protease complex with broad specificity involved in protein degradation. This Kineococcus radiotolerans (strain ATCC BAA-149 / DSM 14245 / SRS30216) protein is Proteasome subunit beta.